Here is a 344-residue protein sequence, read N- to C-terminus: Centromere protein L (344 aa).

The tract at residues 1–32 (MAGGRPAGSAIEMEGAMRTLPSSGRPSGTGWQ) is disordered. Over residues 20–32 (LPSSGRPSGTGWQ) the composition is skewed to polar residues.

The protein belongs to the CENP-L/IML3 family. As to quaternary structure, component of the CENPA-HI complex, at least composed of CENPH, CENPI, CENPK, CENPL, CENPM, CENPO and CENPP.

It localises to the nucleus. It is found in the chromosome. Its subcellular location is the centromere. Its function is as follows. Component of the CENPA-HI complex, a centromeric complex involved in assembly of kinetochore proteins, mitotic progression and chromosome segregation. The polypeptide is Centromere protein L (CENPL) (Gallus gallus (Chicken)).